A 259-amino-acid chain; its full sequence is Enkurin (259 aa).

2 disordered regions span residues 1–26 and 76–98; these read MVAM…EPPQ and PPKK…TDHP. Positions 76-88 are enriched in basic and acidic residues; the sequence is PPKKKFEWNERRK. An SH3-binding motif is present at residues 86–92; the sequence is RRKPPVP. In terms of domain architecture, Enkurin spans 163-255; it reads KRNEEVKKAQ…VLEKHKVIYI (93 aa). The tract at residues 163-258 is interaction with TRPC proteins; sequence KRNEEVKKAQ…KHKVIYIANK (96 aa). The IQ domain occupies 179–190; that stretch reads IQENLRKAAMKR.

In terms of assembly, microtubule inner protein component of sperm flagellar doublet microtubules. Binds calmodulin via its IQ domain. Interacts with TRPC1, TRPC2, TRPC5, but not TRPC3. Interacts with CFAP45. Expressed in trachea multiciliated cells.

It is found in the cytoplasm. The protein localises to the cytoskeleton. The protein resides in the flagellum axoneme. It localises to the cilium axoneme. In terms of biological role, adapter that functions to localize a calcium-sensitive signal transduction machinery in sperm to a calcium-permeable ion channel. Microtubule inner protein (MIP) part of the dynein-decorated doublet microtubules (DMTs) in cilia axoneme, which is required for motile cilia beating. This is Enkurin (ENKUR) from Bos taurus (Bovine).